A 602-amino-acid chain; its full sequence is Isocyanide synthase A (602 aa).

The protein belongs to the isocyanide synthase family.

In terms of biological role, isocyanide synthase involved in the biosynthesis of isocyanides (or isonitriles), a class of microbial secondary metabolites. The presence of an isonitrile moiety within a compound imparts unique biological (cytotoxic, antibacterial, and antiprotozoal) and chemical (transition metal coordination) properties and enables synthetic and biochemical applications. The sequence is that of Isocyanide synthase A from Aspergillus fumigatus (strain ATCC MYA-4609 / CBS 101355 / FGSC A1100 / Af293) (Neosartorya fumigata).